The sequence spans 500 residues: Cytochrome P450 6B4 (500 aa).

Residue Cys-443 coordinates heme.

The protein belongs to the cytochrome P450 family. It depends on heme as a cofactor.

The protein localises to the endoplasmic reticulum membrane. Its subcellular location is the microsome membrane. The catalysed reaction is an organic molecule + reduced [NADPH--hemoprotein reductase] + O2 = an alcohol + oxidized [NADPH--hemoprotein reductase] + H2O + H(+). In terms of biological role, enables the insect to feed on furanocoumarin-producing plants and evolved as an adaptation for detoxification of xanthotoxin and other furanocoumarins. This isozyme metabolizes isopimpinellin, imperatorin, and bergapten at high rates, xanthotoxin and psoralen at intermediate rates and angelicin, sphondin, and trioxsalen only at very low rates. The protein is Cytochrome P450 6B4 (CYP6B4) of Papilio glaucus (Eastern tiger swallowtail butterfly).